The following is a 118-amino-acid chain: Large ribosomal subunit protein uL18 (118 aa).

This sequence belongs to the universal ribosomal protein uL18 family. As to quaternary structure, part of the 50S ribosomal subunit; part of the 5S rRNA/L5/L18/L25 subcomplex. Contacts the 5S and 23S rRNAs.

Functionally, this is one of the proteins that bind and probably mediate the attachment of the 5S RNA into the large ribosomal subunit, where it forms part of the central protuberance. This is Large ribosomal subunit protein uL18 from Nitratiruptor sp. (strain SB155-2).